The primary structure comprises 429 residues: UDP-N-acetylglucosamine 1-carboxyvinyltransferase (429 aa).

22–23 serves as a coordination point for phosphoenolpyruvate; that stretch reads KN. Arginine 102 contacts UDP-N-acetyl-alpha-D-glucosamine. Catalysis depends on cysteine 126, which acts as the Proton donor. Cysteine 126 is subject to 2-(S-cysteinyl)pyruvic acid O-phosphothioketal. UDP-N-acetyl-alpha-D-glucosamine contacts are provided by aspartate 316 and isoleucine 338.

This sequence belongs to the EPSP synthase family. MurA subfamily.

It localises to the cytoplasm. It catalyses the reaction phosphoenolpyruvate + UDP-N-acetyl-alpha-D-glucosamine = UDP-N-acetyl-3-O-(1-carboxyvinyl)-alpha-D-glucosamine + phosphate. Its pathway is cell wall biogenesis; peptidoglycan biosynthesis. Its function is as follows. Cell wall formation. Adds enolpyruvyl to UDP-N-acetylglucosamine. This Methylorubrum extorquens (strain PA1) (Methylobacterium extorquens) protein is UDP-N-acetylglucosamine 1-carboxyvinyltransferase.